The following is a 159-amino-acid chain: SsrA-binding protein (159 aa).

Positions 138 to 153 (KREDGKDKDWSREKER) are enriched in basic and acidic residues. Residues 138–159 (KREDGKDKDWSREKERLMKHKA) form a disordered region.

Belongs to the SmpB family.

Its subcellular location is the cytoplasm. Required for rescue of stalled ribosomes mediated by trans-translation. Binds to transfer-messenger RNA (tmRNA), required for stable association of tmRNA with ribosomes. tmRNA and SmpB together mimic tRNA shape, replacing the anticodon stem-loop with SmpB. tmRNA is encoded by the ssrA gene; the 2 termini fold to resemble tRNA(Ala) and it encodes a 'tag peptide', a short internal open reading frame. During trans-translation Ala-aminoacylated tmRNA acts like a tRNA, entering the A-site of stalled ribosomes, displacing the stalled mRNA. The ribosome then switches to translate the ORF on the tmRNA; the nascent peptide is terminated with the 'tag peptide' encoded by the tmRNA and targeted for degradation. The ribosome is freed to recommence translation, which seems to be the essential function of trans-translation. The protein is SsrA-binding protein of Pseudoalteromonas translucida (strain TAC 125).